The primary structure comprises 1757 residues: 1-phosphatidylinositol-3-phosphate 5-kinase FAB1A (1757 aa).

Residues 36–102 (DQSCPVCYEC…VCNYCYKQWE (67 aa)) form an FYVE-type zinc finger. Residues C42, C45, C58, C61, C66, C69, C94, and C97 each contribute to the Zn(2+) site. Disordered stretches follow at residues 125 to 193 (ARSV…SDNQ), 276 to 297 (KTRQ…CEES), 313 to 346 (LPPE…YLRP), and 684 to 709 (AEKS…NFTS). Polar residues predominate over residues 134 to 145 (NSSNCTIDSTAG). Positions 317-337 (PENEEDEREAVLSDDDGDEGD) are enriched in acidic residues. Residues 1014 to 1087 (LQKESKEVIK…LQQMLNVVKD (74 aa)) adopt a coiled-coil conformation. The PIPK domain occupies 1395-1719 (SFSLFDSVNL…RFRKAMTAYF (325 aa)). Residues 1729–1739 (AAVVPSNSSSA) are compositionally biased toward low complexity. The interval 1729-1757 (AAVVPSNSSSAEVKEEEEKDNPQAVGNKS) is disordered.

In terms of assembly, component of the PI(3,5)P2 regulatory complex at least composed of ATG18, SAC/FIG4, FAB1 and VAC14. It depends on Mg(2+) as a cofactor. The cofactor is Mn(2+). Ubiquitous with highest expression levels in pollen, seed, and senescent leaves.

It is found in the endosome membrane. The enzyme catalyses a 1,2-diacyl-sn-glycero-3-phospho-(1D-myo-inositol-3-phosphate) + ATP = a 1,2-diacyl-sn-glycero-3-phospho-(1D-myo-inositol-3,5-bisphosphate) + ADP + H(+). In terms of biological role, the PI(3,5)P2 regulatory complex regulates both the synthesis and turnover of phosphatidylinositol 3,5-bisphosphate (PtdIns(3,5)P2). Catalyzes the phosphorylation of phosphatidylinositol 3-phosphate on the fifth hydroxyl of the myo-inositol ring, to form phosphatidylinositol 3,5-bisphosphate. Plays an important role in maintenance of endomembrane homeostasis including endocytosis, vacuole formation, and vacuolar acidification processes. Required for development of viable pollen. Might mediate recycling of auxin transporters. This Arabidopsis thaliana (Mouse-ear cress) protein is 1-phosphatidylinositol-3-phosphate 5-kinase FAB1A (FAB1A).